Consider the following 317-residue polypeptide: Ribose-phosphate pyrophosphokinase A (317 aa).

Residues aspartate 130, histidine 132, and aspartate 145 each contribute to the Mg(2+) site. Residues 212–227 (KDKVALIVDDMADTCG) form a binding of phosphoribosylpyrophosphate region.

The protein belongs to the ribose-phosphate pyrophosphokinase family. Mg(2+) serves as cofactor.

It catalyses the reaction D-ribose 5-phosphate + ATP = 5-phospho-alpha-D-ribose 1-diphosphate + AMP + H(+). The protein operates within metabolic intermediate biosynthesis; 5-phospho-alpha-D-ribose 1-diphosphate biosynthesis; 5-phospho-alpha-D-ribose 1-diphosphate from D-ribose 5-phosphate (route I): step 1/1. The chain is Ribose-phosphate pyrophosphokinase A (prsA) from Dictyostelium discoideum (Social amoeba).